The sequence spans 96 residues: UPF0235 protein Sputw3181_1321 (96 aa).

Belongs to the UPF0235 family.

The sequence is that of UPF0235 protein Sputw3181_1321 from Shewanella sp. (strain W3-18-1).